A 472-amino-acid polypeptide reads, in one-letter code: Adenosylhomocysteinase (472 aa).

Substrate is bound by residues threonine 60, aspartate 136, and glutamate 197. 198–200 is an NAD(+) binding site; sequence TTT. The substrate site is built by lysine 227 and aspartate 231. NAD(+)-binding positions include asparagine 232, 261–266, glutamate 284, asparagine 319, 340–342, and asparagine 388; these read GYGDVG and IGH.

It belongs to the adenosylhomocysteinase family. Requires NAD(+) as cofactor.

The protein resides in the cytoplasm. It catalyses the reaction S-adenosyl-L-homocysteine + H2O = L-homocysteine + adenosine. It participates in amino-acid biosynthesis; L-homocysteine biosynthesis; L-homocysteine from S-adenosyl-L-homocysteine: step 1/1. Its function is as follows. May play a key role in the regulation of the intracellular concentration of adenosylhomocysteine. The protein is Adenosylhomocysteinase of Maridesulfovibrio salexigens (strain ATCC 14822 / DSM 2638 / NCIMB 8403 / VKM B-1763) (Desulfovibrio salexigens).